The sequence spans 298 residues: N-acetylmuramic acid 6-phosphate etherase (298 aa).

Residues 55–218 (IHAQVSGGGR…STGLMIKSGK (164 aa)) form the SIS domain. Residue Glu-83 is the Proton donor of the active site. Residue Glu-114 is part of the active site.

Belongs to the GCKR-like family. MurNAc-6-P etherase subfamily. Homodimer.

The catalysed reaction is N-acetyl-D-muramate 6-phosphate + H2O = N-acetyl-D-glucosamine 6-phosphate + (R)-lactate. The protein operates within amino-sugar metabolism; 1,6-anhydro-N-acetylmuramate degradation. It functions in the pathway amino-sugar metabolism; N-acetylmuramate degradation. It participates in cell wall biogenesis; peptidoglycan recycling. Functionally, specifically catalyzes the cleavage of the D-lactyl ether substituent of MurNAc 6-phosphate, producing GlcNAc 6-phosphate and D-lactate. Together with AnmK, is also required for the utilization of anhydro-N-acetylmuramic acid (anhMurNAc) either imported from the medium or derived from its own cell wall murein, and thus plays a role in cell wall recycling. This Escherichia coli (strain SMS-3-5 / SECEC) protein is N-acetylmuramic acid 6-phosphate etherase.